The following is a 403-amino-acid chain: Nodal homolog (403 aa).

Positions 1-18 (MAFLTAVLCFGFACMVQG) are cleaved as a signal peptide. A propeptide spanning residues 19–278 (VPSWLESRIP…RMPGIRRHRR (260 aa)) is cleaved from the precursor. Residues N68, N133, and N169 are each glycosylated (N-linked (GlcNAc...) asparagine). Residues 195–220 (AERGSGMSSAEFLDSPGDSPQYNPHH) are disordered. 3 cysteine pairs are disulfide-bonded: C303–C369, C332–C400, and C336–C402. N341 is a glycosylation site (N-linked (GlcNAc...) asparagine).

It belongs to the TGF-beta family. As to quaternary structure, homodimer; disulfide-linked. Interacts with, and is inhibited by cer1 and gdf10/bmp3b.

It is found in the secreted. In terms of biological role, cooperation and regulatory loops of multiple nodals are essential for mesendoderm patterning in early embryos. Essential for mesoderm formation and axial patterning during embryonic development. Activates the activin-like signaling pathway to induce dorsal and ventral mesoderm in animal cap ectoderm. In addition, also dorsalizes ventral marginal zone (VMZ) tissues during gastrulation. Acts in a downstream signaling cascade via cripto and cer1 to mediate cardiogenesis in embryonic mesoderm. Directs the orientation of the left-right axis by driving the left-specific gene cascade in the left lateral plate mesoderm. In Xenopus tropicalis (Western clawed frog), this protein is Nodal homolog.